The chain runs to 117 residues: Large ribosomal subunit protein uL18 (117 aa).

This sequence belongs to the universal ribosomal protein uL18 family. As to quaternary structure, part of the 50S ribosomal subunit; part of the 5S rRNA/L5/L18/L25 subcomplex. Contacts the 5S and 23S rRNAs.

This is one of the proteins that bind and probably mediate the attachment of the 5S RNA into the large ribosomal subunit, where it forms part of the central protuberance. In Laribacter hongkongensis (strain HLHK9), this protein is Large ribosomal subunit protein uL18.